The primary structure comprises 421 residues: MAARKQSSQPSRTPVSYEDVAVSFTQEEWEYLTSTQKTLYQKVMSETFKNLTFVGSKKKPQEPSSDLQDKNEEQEKSSSCTGVFKGGPFFFCLTCGKCFKKNTFLFNHQFPVRSRRLAVTNPQSRKGKGYKAQHRGERPFFCNFCGKTYRDASGLSRHRRAHLGYRPRSCPECGKCFRDQSEVNRHLKVHQNKPAASNQAGNQASNQRLKSRVPPTTPRSQAPALKYVKVIQGPVARAKARNSGASTLNVRSNSITVVRSREKISCPYCHITFTMRTCLLTHLKIHFRRQPNQHFCCKESAHSSNTLRMQKIYTCPVCDSSFRGKESLLDHLCCQRPIRFSKCWEILGHLLGYLHEPVVLGNIFKVRDSSGKRMESRRRRRKRACTENPETEGLSGKGRVAPWEMEGATSPESPVTEEDSD.

A KRAB domain is found at 15–88 (VSYEDVAVSF…SCTGVFKGGP (74 aa)). The segment at 90–113 (FFCLTCGKCFKKNTFLFNHQFPVR) adopts a C2H2-type 1; degenerate zinc-finger fold. C2H2-type zinc fingers lie at residues 140–162 (FFCN…RRAH) and 168–190 (RSCP…LKVH). Positions 191 to 221 (QNKPAASNQAGNQASNQRLKSRVPPTTPRSQ) are disordered. Residues 195-207 (AASNQAGNQASNQ) show a composition bias toward low complexity. Residues 264–286 (ISCPYCHITFTMRTCLLTHLKIH) form a C2H2-type 4 zinc finger. The C2H2-type 5; degenerate zinc-finger motif lies at 313 to 332 (YTCPVCDSSFRGKESLLDHL). Residues 371–421 (GKRMESRRRRRKRACTENPETEGLSGKGRVAPWEMEGATSPESPVTEEDSD) are disordered.

The protein belongs to the krueppel C2H2-type zinc-finger protein family. Expressed in oocytes and in a subset of adult tissues. Expressed at high levels in testis, and at low levels in cerebellum. Present in sciatic nerve and spinal cord (at protein level).

It is found in the nucleus. Transcription regulator required to maintain maternal and paternal gene imprinting, a process by which gene expression is restricted in a parent of origin-specific manner by epigenetic modification of genomic DNA and chromatin, including DNA methylation. Acts by controlling DNA methylation during the earliest multicellular stages of development at multiple imprinting control regions (ICRs). Acts together with ZNF445, but ZFP57 plays the predominant role in imprinting maintenance. In contrast, in humans, ZNF445 seems to be the major factor early embryonic imprinting maintenance. Required for the establishment of maternal methylation imprints at SNRPN locus. Acts as a transcriptional repressor in Schwann cells. Binds to a 5'-TGCCGC-3' consensus sequence and recognizes the methylated CpG within this element. This chain is Zinc finger protein 57 (Zfp57), found in Mus musculus (Mouse).